The sequence spans 447 residues: UDP-N-acetylmuramoylalanine--D-glutamate ligase (447 aa).

130-136 (GTSGKTT) provides a ligand contact to ATP.

The protein belongs to the MurCDEF family.

It is found in the cytoplasm. The catalysed reaction is UDP-N-acetyl-alpha-D-muramoyl-L-alanine + D-glutamate + ATP = UDP-N-acetyl-alpha-D-muramoyl-L-alanyl-D-glutamate + ADP + phosphate + H(+). It participates in cell wall biogenesis; peptidoglycan biosynthesis. In terms of biological role, cell wall formation. Catalyzes the addition of glutamate to the nucleotide precursor UDP-N-acetylmuramoyl-L-alanine (UMA). The protein is UDP-N-acetylmuramoylalanine--D-glutamate ligase of Oleidesulfovibrio alaskensis (strain ATCC BAA-1058 / DSM 17464 / G20) (Desulfovibrio alaskensis).